Consider the following 844-residue polypeptide: Leucine--tRNA ligase (844 aa).

Positions 39 to 49 match the 'HIGH' region motif; the sequence is PYPSGRIHMGH. The short motif at 621–625 is the 'KMSKS' region element; it reads KMSKS. Lys624 contacts ATP.

It belongs to the class-I aminoacyl-tRNA synthetase family.

It is found in the cytoplasm. It catalyses the reaction tRNA(Leu) + L-leucine + ATP = L-leucyl-tRNA(Leu) + AMP + diphosphate. This is Leucine--tRNA ligase from Paracoccus denitrificans (strain Pd 1222).